Reading from the N-terminus, the 38-residue chain is Cytochrome b6-f complex subunit 5 (38 aa).

The helical transmembrane segment at 5–25 (LLLGIVLGLIPVTLAGLFVAA) threads the bilayer.

Belongs to the PetG family. In terms of assembly, the 4 large subunits of the cytochrome b6-f complex are cytochrome b6, subunit IV (17 kDa polypeptide, PetD), cytochrome f and the Rieske protein, while the 4 small subunits are PetG, PetL, PetM and PetN. The complex functions as a dimer.

It localises to the cellular thylakoid membrane. In terms of biological role, component of the cytochrome b6-f complex, which mediates electron transfer between photosystem II (PSII) and photosystem I (PSI), cyclic electron flow around PSI, and state transitions. PetG is required for either the stability or assembly of the cytochrome b6-f complex. In Picosynechococcus sp. (strain ATCC 27264 / PCC 7002 / PR-6) (Agmenellum quadruplicatum), this protein is Cytochrome b6-f complex subunit 5.